The sequence spans 415 residues: MDELLEKAKKVREAWDVLRNATTREKNKAIKKIAEKLDERRKEILEANRIDVEKARERGVKESLVDRLALNDKRIDEMIKACETVIGLKDPVGEVIDSWVREDGLRIARVRVPIGPIGIIYESRPNVTVETTILALKSGNTILLRGGSDALNSNKAIVSAIREALKETEIPESSVEFIENTDRSLVLEMIRLREYLSLVIPRGGYGLISFVRDNATVPVLETGVGNCHIFVDESADLKKAVPVIINAKTQRPGTCNAAEKLLVHEKIAKEFLPVIVEELRKHGVEVRGCEKTREIVPDVVPATEDDWPTEYLDLIIAIKVVKNVDEAIEHIKKYSTGHSESILTENYSNAKKFVSEIDAAAVYVNASTRFTDGGQFGFGAEIGISTQRFHARGPVGLRELTTYKFVVLGEYHVRE.

It belongs to the gamma-glutamyl phosphate reductase family.

It is found in the cytoplasm. It carries out the reaction L-glutamate 5-semialdehyde + phosphate + NADP(+) = L-glutamyl 5-phosphate + NADPH + H(+). It functions in the pathway amino-acid biosynthesis; L-proline biosynthesis; L-glutamate 5-semialdehyde from L-glutamate: step 2/2. Its function is as follows. Catalyzes the NADPH-dependent reduction of L-glutamate 5-phosphate into L-glutamate 5-semialdehyde and phosphate. The product spontaneously undergoes cyclization to form 1-pyrroline-5-carboxylate. The chain is Gamma-glutamyl phosphate reductase from Thermotoga maritima (strain ATCC 43589 / DSM 3109 / JCM 10099 / NBRC 100826 / MSB8).